A 227-amino-acid chain; its full sequence is Cytidylate kinase (227 aa).

Residue 10 to 18 participates in ATP binding; the sequence is GPASSGKST.

Belongs to the cytidylate kinase family. Type 1 subfamily.

It is found in the cytoplasm. It catalyses the reaction CMP + ATP = CDP + ADP. The enzyme catalyses dCMP + ATP = dCDP + ADP. The sequence is that of Cytidylate kinase from Streptococcus agalactiae serotype V (strain ATCC BAA-611 / 2603 V/R).